Here is a 268-residue protein sequence, read N- to C-terminus: 3-methyl-2-oxobutanoate hydroxymethyltransferase (268 aa).

Mg(2+) contacts are provided by aspartate 41 and aspartate 80. 3-methyl-2-oxobutanoate is bound by residues 41–42 (DS), aspartate 80, and lysine 110. Glutamate 112 contributes to the Mg(2+) binding site. The active-site Proton acceptor is glutamate 178.

It belongs to the PanB family. As to quaternary structure, homodecamer; pentamer of dimers. The cofactor is Mg(2+).

It localises to the cytoplasm. The catalysed reaction is 3-methyl-2-oxobutanoate + (6R)-5,10-methylene-5,6,7,8-tetrahydrofolate + H2O = 2-dehydropantoate + (6S)-5,6,7,8-tetrahydrofolate. It functions in the pathway cofactor biosynthesis; coenzyme A biosynthesis. Its function is as follows. Catalyzes the reversible reaction in which hydroxymethyl group from 5,10-methylenetetrahydrofolate is transferred onto alpha-ketoisovalerate to form ketopantoate. The polypeptide is 3-methyl-2-oxobutanoate hydroxymethyltransferase (Natronomonas pharaonis (strain ATCC 35678 / DSM 2160 / CIP 103997 / JCM 8858 / NBRC 14720 / NCIMB 2260 / Gabara) (Halobacterium pharaonis)).